The chain runs to 447 residues: Probable glycine dehydrogenase (decarboxylating) subunit 1 (447 aa).

Belongs to the GcvP family. N-terminal subunit subfamily. The glycine cleavage system is composed of four proteins: P, T, L and H. In this organism, the P 'protein' is a heterodimer of two subunits.

The enzyme catalyses N(6)-[(R)-lipoyl]-L-lysyl-[glycine-cleavage complex H protein] + glycine + H(+) = N(6)-[(R)-S(8)-aminomethyldihydrolipoyl]-L-lysyl-[glycine-cleavage complex H protein] + CO2. Its function is as follows. The glycine cleavage system catalyzes the degradation of glycine. The P protein binds the alpha-amino group of glycine through its pyridoxal phosphate cofactor; CO(2) is released and the remaining methylamine moiety is then transferred to the lipoamide cofactor of the H protein. The polypeptide is Probable glycine dehydrogenase (decarboxylating) subunit 1 (Bacillus cereus (strain G9842)).